Here is a 714-residue protein sequence, read N- to C-terminus: DNA gyrase subunit B (714 aa).

Positions 492–606 constitute a Toprim domain; that stretch reads SELYVVEGDS…NGHVFLAQPP (115 aa). Residues E498, D571, and D573 each coordinate Mg(2+).

It belongs to the type II topoisomerase GyrB family. In terms of assembly, heterotetramer, composed of two GyrA and two GyrB chains. In the heterotetramer, GyrA contains the active site tyrosine that forms a transient covalent intermediate with DNA, while GyrB binds cofactors and catalyzes ATP hydrolysis. It depends on Mg(2+) as a cofactor. Mn(2+) serves as cofactor. Ca(2+) is required as a cofactor.

The protein localises to the cytoplasm. The enzyme catalyses ATP-dependent breakage, passage and rejoining of double-stranded DNA.. Its activity is regulated as follows. DNA supercoiling is inhibited by EDTA, novobiocin, coumermycin and ciprofloxacin. Its function is as follows. A type II topoisomerase that negatively supercoils closed circular double-stranded DNA in an ATP-dependent manner and also catalyzes the interconversion of other topological isomers of double-stranded DNA rings, including catenanes and knotted rings. Relaxes negatively supercoiled DNA in an ATP-independent manner. A linear reaction intermediate can be trapped in the presence of the antibiotic ciprofloxacin. Negative supercoiling favors strand separation, and DNA replication, transcription, recombination and repair, all of which involve strand separation. Type II topoisomerases break and join 2 DNA strands simultaneously in an ATP-dependent manner. The polypeptide is DNA gyrase subunit B (Mycobacterium bovis (strain BCG / Pasteur 1173P2)).